The sequence spans 1316 residues: DNA-directed RNA polymerase subunit beta' (1316 aa).

4 residues coordinate Zn(2+): Cys-60, Cys-62, Cys-75, and Cys-78. 3 residues coordinate Mg(2+): Asp-535, Asp-537, and Asp-539. The Zn(2+) site is built by Cys-891, Cys-968, Cys-975, and Cys-978.

Belongs to the RNA polymerase beta' chain family. The RNAP catalytic core consists of 2 alpha, 1 beta, 1 beta' and 1 omega subunit. When a sigma factor is associated with the core the holoenzyme is formed, which can initiate transcription. Mg(2+) serves as cofactor. It depends on Zn(2+) as a cofactor.

It carries out the reaction RNA(n) + a ribonucleoside 5'-triphosphate = RNA(n+1) + diphosphate. Functionally, DNA-dependent RNA polymerase catalyzes the transcription of DNA into RNA using the four ribonucleoside triphosphates as substrates. In Mycobacterium tuberculosis (strain CDC 1551 / Oshkosh), this protein is DNA-directed RNA polymerase subunit beta'.